A 297-amino-acid polypeptide reads, in one-letter code: 4-hydroxybenzoate octaprenyltransferase (297 aa).

9 consecutive transmembrane segments (helical) span residues 29–49 (IGTY…AEGV), 55–75 (LFIF…VNDF), 102–122 (AWTL…LTNA), 124–141 (TVYL…YPFM), 146–166 (FYPQ…AFTA), 169–189 (GSLP…TVAY), 219–239 (VIIV…GVRF), 241–261 (LGQW…WEFW), and 270–290 (VCFK…AGIV).

This sequence belongs to the UbiA prenyltransferase family. Requires Mg(2+) as cofactor.

Its subcellular location is the cell inner membrane. The enzyme catalyses all-trans-octaprenyl diphosphate + 4-hydroxybenzoate = 4-hydroxy-3-(all-trans-octaprenyl)benzoate + diphosphate. The protein operates within cofactor biosynthesis; ubiquinone biosynthesis. Its function is as follows. Catalyzes the prenylation of para-hydroxybenzoate (PHB) with an all-trans polyprenyl group. Mediates the second step in the final reaction sequence of ubiquinone-8 (UQ-8) biosynthesis, which is the condensation of the polyisoprenoid side chain with PHB, generating the first membrane-bound Q intermediate 3-octaprenyl-4-hydroxybenzoate. The sequence is that of 4-hydroxybenzoate octaprenyltransferase from Stutzerimonas stutzeri (strain A1501) (Pseudomonas stutzeri).